Here is a 233-residue protein sequence, read N- to C-terminus: Small ribosomal subunit protein uS3 (233 aa).

The region spanning 39–107 (VRKYLTKELE…PAQINIAEVR (69 aa)) is the KH type-2 domain. Residues 214–233 (VEQPEKPSAQPKKQQRKGRK) form a disordered region.

The protein belongs to the universal ribosomal protein uS3 family. Part of the 30S ribosomal subunit. Forms a tight complex with proteins S10 and S14.

Its function is as follows. Binds the lower part of the 30S subunit head. Binds mRNA in the 70S ribosome, positioning it for translation. This Pectobacterium atrosepticum (strain SCRI 1043 / ATCC BAA-672) (Erwinia carotovora subsp. atroseptica) protein is Small ribosomal subunit protein uS3.